Reading from the N-terminus, the 78-residue chain is Conotoxin TsMEKL-P012 (78 aa).

Positions 1–19 (MEKLTILLLLAAVLVLAQA) are cleaved as a signal peptide. Positions 20–38 (LIKKGGGEKRQKEKINFLS) are excised as a propeptide. 3 disulfides stabilise this stretch: Cys-52–Cys-66, Cys-59–Cys-70, and Cys-65–Cys-75.

This sequence belongs to the conotoxin O2 superfamily. As to expression, expressed by the venom duct.

Its subcellular location is the secreted. This chain is Conotoxin TsMEKL-P012, found in Conus tessulatus (Tessellate cone).